The following is a 201-amino-acid chain: Small ribosomal subunit protein uS4c (201 aa).

A disordered region spans residues 20–44 (GLTNKKPRAGSDLRNQSRSGKKSQY). Residues 89–150 (MRLDNILFRL…EQKSKALIQI (62 aa)) enclose the S4 RNA-binding domain.

It belongs to the universal ribosomal protein uS4 family. Part of the 30S ribosomal subunit. Contacts protein S5. The interaction surface between S4 and S5 is involved in control of translational fidelity.

The protein resides in the plastid. Its subcellular location is the chloroplast. One of the primary rRNA binding proteins, it binds directly to 16S rRNA where it nucleates assembly of the body of the 30S subunit. Its function is as follows. With S5 and S12 plays an important role in translational accuracy. The protein is Small ribosomal subunit protein uS4c (rps4) of Nicotiana tomentosiformis (Tobacco).